The sequence spans 142 residues: Centromere protein S (142 aa).

Residues 107–142 are disordered; that stretch reads LKGKAKKKRKPEDESRSSRESMAEELDGAEELQSES. A compositionally biased stretch (basic and acidic residues) spans 116 to 128; the sequence is KPEDESRSSRESM. Positions 129-142 are enriched in acidic residues; it reads AEELDGAEELQSES.

The protein belongs to the TAF9 family. CENP-S/MHF1 subfamily. In terms of assembly, heterodimer with CENPX, sometimes called MHF; this interaction stabilizes both partners. MHF heterodimers can assemble to form tetrameric structures. MHF also coassemble with CENPT-CENPW heterodimers at centromeres to form the tetrameric CENP-T-W-S-X complex. Forms a discrete complex with FANCM and CENPX, called FANCM-MHF; this interaction, probably mediated by direct binding between CENPS and FANCM, leads to synergistic activation of double-stranded DNA binding and strongly stimulates FANCM-mediated DNA remodeling. Recruited by FANCM to the Fanconi anemia (FA) core complex, which consists of CENPS, CENPX, FANCA, FANCB, FANCC, FANCE, FANCF, FANCG, FANCL, FANCM, FAAP24 and FAAP100. The FA core complex associates with Bloom syndrome (BLM) complex, which consists of at least BLM, DNA topoisomerase 3-alpha (TOP3A), RMI1/BLAP75, RPA1/RPA70 and RPA2/RPA32. The super complex between FA and BLM is called BRAFT. Component of the CENPA-CAD complex, composed of CENPI, CENPK, CENPL, CENPO, CENPP, CENPQ, CENPR and CENPS. The CENPA-CAD complex is probably recruited on centromeres by the CENPA-NAC complex, at least composed of CENPA, CENPC, CENPH, CENPM, CENPN, CENPT and CENPU.

It localises to the nucleus. It is found in the chromosome. The protein localises to the centromere. Its subcellular location is the kinetochore. Its function is as follows. DNA-binding component of the Fanconi anemia (FA) core complex. Required for the normal activation of the FA pathway, leading to monoubiquitination of the FANCI-FANCD2 complex in response to DNA damage, cellular resistance to DNA cross-linking drugs, and prevention of chromosomal breakage. In complex with CENPX (MHF heterodimer), crucial cofactor for FANCM in both binding and ATP-dependent remodeling of DNA. Stabilizes FANCM. In complex with CENPX and FANCM (but not other FANC proteins), rapidly recruited to blocked forks and promotes gene conversion at blocked replication forks. In complex with CENPT, CENPW and CENPX (CENP-T-W-S-X heterotetramer), involved in the formation of a functional kinetochore outer plate, which is essential for kinetochore-microtubule attachment and faithful mitotic progression. As a component of MHF and CENP-T-W-S-X complexes, binds DNA and bends it to form a nucleosome-like structure. DNA-binding function is fulfilled in the presence of CENPX, with the following preference for DNA substates: Holliday junction &gt; double-stranded &gt; splay arm &gt; single-stranded. Does not bind DNA on its own. The chain is Centromere protein S (Cenps) from Mus musculus (Mouse).